The chain runs to 439 residues: uncharacterized protein (439 aa).

Disordered stretches follow at residues 1-36 (MRPG…SKQA), 126-157 (SRTG…GVPI), and 411-439 (FRSD…AVPR).

This is an uncharacterized protein from Streptomyces fradiae (Streptomyces roseoflavus).